The primary structure comprises 270 residues: 2-heptyl-3-hydroxy-4-quinolone dioxygenase AqdC2 (270 aa).

In terms of domain architecture, AB hydrolase-1 spans 25–156; the sequence is PALVLLTGWG…KSARAGLAKS (132 aa). H99 is a binding site for substrate. H248 (proton donor/acceptor) is an active-site residue.

This sequence belongs to the AB hydrolase superfamily.

The enzyme catalyses 2-heptyl-3-hydroxy-4(1H)-quinolone + O2 = N-octanoylanthranilate + CO + H(+). Its function is as follows. Involved in the degradation of the Pseudomonas aeruginosa quorum sensing signal molecules HHQ (2-heptyl-4-quinolone) and PQS (2-heptyl-3-hydroxy-4-quinolone) to anthranilic acid. Catalyzes the cleavage of PQS to form N-octanoylanthranilic acid and carbon monoxide. The chain is 2-heptyl-3-hydroxy-4-quinolone dioxygenase AqdC2 from Rhodococcus erythropolis (Arthrobacter picolinophilus).